A 281-amino-acid chain; its full sequence is MTGQPSTPVRPGSVVRTVRRHRGGRSATVQDMVAAEMPVAFNYNGVPFAVMMATPEDLEDFALGFSLSEGIVDHPQDLRVVAVDTFLEGASLQIEIPPERAAALDQRRRNLDGRSGCGVCGNESIEAVLRVPPVLQSALRIDVDALARALDALHARQPIAAQTGAVHAAGWADAQGMVQLVREDVGRHNALDKLIGALARARVDATQGFAVVTSRASYEMAMKAAQARIPLLAAISAPTALAISLADSAGLTLIGFARDHDCVVYSHPQRLDLGVAVGEPA.

Cys-117 acts as the Cysteine persulfide intermediate in catalysis.

Belongs to the FdhD family.

The protein localises to the cytoplasm. Required for formate dehydrogenase (FDH) activity. Acts as a sulfur carrier protein that transfers sulfur from IscS to the molybdenum cofactor prior to its insertion into FDH. The polypeptide is Sulfur carrier protein FdhD (Xanthomonas campestris pv. campestris (strain 8004)).